A 721-amino-acid chain; its full sequence is Polyribonucleotide nucleotidyltransferase (721 aa).

Mg(2+) is bound by residues D487 and D493. In terms of domain architecture, KH spans 554–613 (PRIETFKIPTDKIREVIGTGGKVIREIVEKTGAKVNIDDDGTVKVASSDGESIKAAIKWI). The 69-residue stretch at 623–691 (NAIYDGTVVK…DRGKTRLSMK (69 aa)) folds into the S1 motif domain. The tract at residues 697-721 (TGEDLEAKQKAEAEKAKAEGAPAAE) is disordered. Over residues 701 to 714 (LEAKQKAEAEKAKA) the composition is skewed to basic and acidic residues.

This sequence belongs to the polyribonucleotide nucleotidyltransferase family. Requires Mg(2+) as cofactor.

The protein localises to the cytoplasm. The catalysed reaction is RNA(n+1) + phosphate = RNA(n) + a ribonucleoside 5'-diphosphate. Involved in mRNA degradation. Catalyzes the phosphorolysis of single-stranded polyribonucleotides processively in the 3'- to 5'-direction. This chain is Polyribonucleotide nucleotidyltransferase, found in Rhodopseudomonas palustris (strain BisA53).